A 471-amino-acid polypeptide reads, in one-letter code: Chromosomal replication initiator protein DnaA (471 aa).

The interval 1-77 (MELNSSFWTL…YTEISDTYGK (77 aa)) is domain I, interacts with DnaA modulators. The tract at residues 77 to 130 (KPFEVEFSITGNKINSHIETSTTPDEVLSGSEILQAQLARAQNIQPTQPRSSSD) is domain II. Residues 131–349 (TLNSELTFST…GNLKKVKMFS (219 aa)) are domain III, AAA+ region. Residues G176, G178, K179, and T180 each contribute to the ATP site. A domain IV, binds dsDNA region spans residues 350-471 (ELQGLPIDHE…EQRIHNITRV (122 aa)).

This sequence belongs to the DnaA family. Oligomerizes as a right-handed, spiral filament on DNA at oriC.

Its subcellular location is the cytoplasm. Functionally, plays an essential role in the initiation and regulation of chromosomal replication. ATP-DnaA binds to the origin of replication (oriC) to initiate formation of the DNA replication initiation complex once per cell cycle. Binds the DnaA box (a 9 base pair repeat at the origin) and separates the double-stranded (ds)DNA. Forms a right-handed helical filament on oriC DNA; dsDNA binds to the exterior of the filament while single-stranded (ss)DNA is stabiized in the filament's interior. The ATP-DnaA-oriC complex binds and stabilizes one strand of the AT-rich DNA unwinding element (DUE), permitting loading of DNA polymerase. After initiation quickly degrades to an ADP-DnaA complex that is not apt for DNA replication. Binds acidic phospholipids. The sequence is that of Chromosomal replication initiator protein DnaA from Bdellovibrio bacteriovorus (strain ATCC 15356 / DSM 50701 / NCIMB 9529 / HD100).